The chain runs to 404 residues: Cysteine desulfurase IscS (404 aa).

Pyridoxal 5'-phosphate is bound by residues alanine 75 to threonine 76, asparagine 155, glutamine 183, and serine 203 to histidine 205. An N6-(pyridoxal phosphate)lysine modification is found at lysine 206. A pyridoxal 5'-phosphate-binding site is contributed by threonine 243. Cysteine 328 functions as the Cysteine persulfide intermediate in the catalytic mechanism. Position 328 (cysteine 328) interacts with [2Fe-2S] cluster.

This sequence belongs to the class-V pyridoxal-phosphate-dependent aminotransferase family. NifS/IscS subfamily. As to quaternary structure, homodimer. Forms a heterotetramer with IscU, interacts with other sulfur acceptors. Pyridoxal 5'-phosphate is required as a cofactor.

It is found in the cytoplasm. The catalysed reaction is (sulfur carrier)-H + L-cysteine = (sulfur carrier)-SH + L-alanine. Its pathway is cofactor biosynthesis; iron-sulfur cluster biosynthesis. Its function is as follows. Master enzyme that delivers sulfur to a number of partners involved in Fe-S cluster assembly, tRNA modification or cofactor biosynthesis. Catalyzes the removal of elemental sulfur atoms from cysteine to produce alanine. Functions as a sulfur delivery protein for Fe-S cluster synthesis onto IscU, an Fe-S scaffold assembly protein, as well as other S acceptor proteins. This chain is Cysteine desulfurase IscS, found in Shewanella woodyi (strain ATCC 51908 / MS32).